Here is a 572-residue protein sequence, read N- to C-terminus: Dihydroxy-acid dehydratase (572 aa).

Aspartate 78 provides a ligand contact to Mg(2+). Cysteine 119 contacts [2Fe-2S] cluster. Mg(2+)-binding residues include aspartate 120 and lysine 121. At lysine 121 the chain carries N6-carboxylysine. Residue cysteine 192 participates in [2Fe-2S] cluster binding. Glutamate 459 contributes to the Mg(2+) binding site. The Proton acceptor role is filled by serine 485.

This sequence belongs to the IlvD/Edd family. In terms of assembly, homodimer. Requires [2Fe-2S] cluster as cofactor. Mg(2+) is required as a cofactor.

It catalyses the reaction (2R)-2,3-dihydroxy-3-methylbutanoate = 3-methyl-2-oxobutanoate + H2O. It carries out the reaction (2R,3R)-2,3-dihydroxy-3-methylpentanoate = (S)-3-methyl-2-oxopentanoate + H2O. The protein operates within amino-acid biosynthesis; L-isoleucine biosynthesis; L-isoleucine from 2-oxobutanoate: step 3/4. It participates in amino-acid biosynthesis; L-valine biosynthesis; L-valine from pyruvate: step 3/4. Its function is as follows. Functions in the biosynthesis of branched-chain amino acids. Catalyzes the dehydration of (2R,3R)-2,3-dihydroxy-3-methylpentanoate (2,3-dihydroxy-3-methylvalerate) into 2-oxo-3-methylpentanoate (2-oxo-3-methylvalerate) and of (2R)-2,3-dihydroxy-3-methylbutanoate (2,3-dihydroxyisovalerate) into 2-oxo-3-methylbutanoate (2-oxoisovalerate), the penultimate precursor to L-isoleucine and L-valine, respectively. The chain is Dihydroxy-acid dehydratase from Helicobacter hepaticus (strain ATCC 51449 / 3B1).